The primary structure comprises 397 residues: Tryptophan synthase beta chain (397 aa).

The residue at position 91 (K91) is an N6-(pyridoxal phosphate)lysine.

This sequence belongs to the TrpB family. Tetramer of two alpha and two beta chains. Requires pyridoxal 5'-phosphate as cofactor.

The catalysed reaction is (1S,2R)-1-C-(indol-3-yl)glycerol 3-phosphate + L-serine = D-glyceraldehyde 3-phosphate + L-tryptophan + H2O. It functions in the pathway amino-acid biosynthesis; L-tryptophan biosynthesis; L-tryptophan from chorismate: step 5/5. In terms of biological role, the beta subunit is responsible for the synthesis of L-tryptophan from indole and L-serine. In Bacillus thuringiensis (strain Al Hakam), this protein is Tryptophan synthase beta chain.